A 956-amino-acid polypeptide reads, in one-letter code: Calsyntenin-3 (956 aa).

A signal peptide spans 1–20; the sequence is MARMSFLSFLLFCLTSVAHG. Topologically, residues 21–850 are extracellular; sequence NKANKHKPWI…PHRNSVVPGA (830 aa). Cadherin domains follow at residues 30–151 and 152–271; these read IETE…SPVF and VERR…IPLF. Asn-333, Asn-353, Asn-513, and Asn-743 each carry an N-linked (GlcNAc...) asparagine glycan. Residues 851–871 form a helical membrane-spanning segment; it reads ATVIIMVCVGFLVVMVILGVF. At 872 to 956 the chain is on the cytoplasmic side; the sequence is RIRSIHRRGE…EGRDSAPRRY (85 aa). Positions 921–937 are enriched in acidic residues; sequence GECEDEEEVVDSPDDTS. Positions 921-956 are disordered; it reads GECEDEEEVVDSPDDTSDDQRIIIKKEGRDSAPRRY. Basic and acidic residues predominate over residues 938 to 956; sequence DDQRIIIKKEGRDSAPRRY.

This sequence belongs to the calsyntenin family. As to quaternary structure, homooligomer and heterooligomer; mediates both homophilic and heterophilc interactions with clstn1 and clstn2 paralogs via cadherin domains. Interacts (via cadherin domains) with both alpha and beta isoforms of neurexins. In terms of tissue distribution, by 48 hours post-fertilization (hpf), widely expressed in the brain, with strong expression in the telencephalon and the midbrain. Not expressed in the optic tectum.

Its subcellular location is the postsynaptic cell membrane. It localises to the endoplasmic reticulum membrane. It is found in the golgi apparatus membrane. In terms of biological role, synaptic adhesion molecule. Promotes synapse development by acting as a cell adhesion molecule at the postsynaptic membrane, which associates with presynaptic neurexins. In Danio rerio (Zebrafish), this protein is Calsyntenin-3.